Reading from the N-terminus, the 445-residue chain is Hydroxycinnamoyl-CoA:5-hydroxyanthranilate N-hydroxycinnamoyltransferase HHT4 (445 aa).

It belongs to the plant acyltransferase family.

The enzyme catalyses 5-hydroxyanthranilate + (E)-4-coumaroyl-CoA = avenanthramide A + CoA. It catalyses the reaction 5-hydroxyanthranilate + (E)-caffeoyl-CoA = avenanthramide C + CoA. Involved in the biosynthesis of avenanthramide phytoalexins, which are phenolic alkaloids found mainly in oats. Catalyzes the N-acylation of 5-hydroxyanthranilate with 4-coumaroyl-CoA or caffeoyl-CoA as acyl donors, forming avenanthramide A and avenanthramide C, respectively. Does not accept feruloyl-CoA as a substrate. This chain is Hydroxycinnamoyl-CoA:5-hydroxyanthranilate N-hydroxycinnamoyltransferase HHT4, found in Avena sativa (Oat).